We begin with the raw amino-acid sequence, 221 residues long: PKHD-type hydroxylase PMT9312_1262 (221 aa).

Residues 80–174 (IIHGIMFTKS…RLVCVGWIES (95 aa)) enclose the Fe2OG dioxygenase domain. His98, Asp100, and His155 together coordinate Fe cation. A 2-oxoglutarate-binding site is contributed by Arg165.

It depends on Fe(2+) as a cofactor. The cofactor is L-ascorbate.

The sequence is that of PKHD-type hydroxylase PMT9312_1262 from Prochlorococcus marinus (strain MIT 9312).